The primary structure comprises 552 residues: Urocanate hydratase (552 aa).

NAD(+)-binding positions include 49 to 50 (GG), Gln127, 173 to 175 (GMG), Asp193, 239 to 240 (NA), 260 to 264 (QTSAH), 270 to 271 (YI), and Tyr319. The active site involves Cys407. Gly489 provides a ligand contact to NAD(+).

It belongs to the urocanase family. NAD(+) is required as a cofactor.

The protein localises to the cytoplasm. The catalysed reaction is 4-imidazolone-5-propanoate = trans-urocanate + H2O. It participates in amino-acid degradation; L-histidine degradation into L-glutamate; N-formimidoyl-L-glutamate from L-histidine: step 2/3. Functionally, catalyzes the conversion of urocanate to 4-imidazolone-5-propionate. In Bacillus cereus (strain 03BB102), this protein is Urocanate hydratase.